The following is a 108-amino-acid chain: Urease subunit beta (108 aa).

Belongs to the urease beta subunit family. Heterotrimer of UreA (gamma), UreB (beta) and UreC (alpha) subunits. Three heterotrimers associate to form the active enzyme.

The protein localises to the cytoplasm. The enzyme catalyses urea + 2 H2O + H(+) = hydrogencarbonate + 2 NH4(+). The protein operates within nitrogen metabolism; urea degradation; CO(2) and NH(3) from urea (urease route): step 1/1. This is Urease subunit beta from Chromohalobacter salexigens (strain ATCC BAA-138 / DSM 3043 / CIP 106854 / NCIMB 13768 / 1H11).